A 251-amino-acid chain; its full sequence is Triosephosphate isomerase (251 aa).

9-11 (NWK) serves as a coordination point for substrate. His95 serves as the catalytic Electrophile. Glu167 acts as the Proton acceptor in catalysis. Residues Gly173, Ser213, and 234–235 (GG) contribute to the substrate site. Position 213 is a phosphoserine (Ser213).

The protein belongs to the triosephosphate isomerase family. In terms of assembly, homodimer.

Its subcellular location is the cytoplasm. It carries out the reaction D-glyceraldehyde 3-phosphate = dihydroxyacetone phosphate. It participates in carbohydrate biosynthesis; gluconeogenesis. Its pathway is carbohydrate degradation; glycolysis; D-glyceraldehyde 3-phosphate from glycerone phosphate: step 1/1. In terms of biological role, involved in the gluconeogenesis. Catalyzes stereospecifically the conversion of dihydroxyacetone phosphate (DHAP) to D-glyceraldehyde-3-phosphate (G3P). The protein is Triosephosphate isomerase of Halalkalibacterium halodurans (strain ATCC BAA-125 / DSM 18197 / FERM 7344 / JCM 9153 / C-125) (Bacillus halodurans).